Consider the following 225-residue polypeptide: Small ribosomal subunit protein eS1 (225 aa).

This sequence belongs to the eukaryotic ribosomal protein eS1 family.

This Methanococcus maripaludis (strain C6 / ATCC BAA-1332) protein is Small ribosomal subunit protein eS1.